Reading from the N-terminus, the 249-residue chain is Triosephosphate isomerase (249 aa).

Residue 9–11 (NWK) participates in substrate binding. Residue His95 is the Electrophile of the active site. The Proton acceptor role is filled by Glu167. Substrate-binding positions include Gly173, Ser213, and 234–235 (GG).

The protein belongs to the triosephosphate isomerase family. As to quaternary structure, homodimer.

The protein resides in the cytoplasm. It carries out the reaction D-glyceraldehyde 3-phosphate = dihydroxyacetone phosphate. It functions in the pathway carbohydrate biosynthesis; gluconeogenesis. The protein operates within carbohydrate degradation; glycolysis; D-glyceraldehyde 3-phosphate from glycerone phosphate: step 1/1. Its function is as follows. Involved in the gluconeogenesis. Catalyzes stereospecifically the conversion of dihydroxyacetone phosphate (DHAP) to D-glyceraldehyde-3-phosphate (G3P). This is Triosephosphate isomerase from Dictyoglomus thermophilum (strain ATCC 35947 / DSM 3960 / H-6-12).